The sequence spans 376 residues: Thymidine kinase (376 aa).

Positions 1–44 (MASYPGHQHASAFDQAARSRGHSNRRTALRPRRQQEATEVRPEQ) are disordered. Over residues 19-32 (SRGHSNRRTALRPR) the composition is skewed to basic residues. Residues 33 to 44 (RQQEATEVRPEQ) show a composition bias toward basic and acidic residues. Residue 56–63 (GPHGMGKT) coordinates ATP. The Proton acceptor role is filled by Glu-83. Substrate-binding residues include Tyr-101 and Gln-125. Arg-216 lines the ATP pocket. Position 222 (Arg-222) interacts with substrate. The tract at residues 260–280 (GQLSGTAVPPQGAEPQSNAGP) is disordered.

Belongs to the herpesviridae thymidine kinase family. As to quaternary structure, homodimer.

It catalyses the reaction thymidine + ATP = dTMP + ADP + H(+). Its function is as follows. Catalyzes the transfer of the gamma-phospho group of ATP to thymidine to generate dTMP in the salvage pathway of pyrimidine synthesis. The dTMP serves as a substrate for DNA polymerase during viral DNA replication. Allows the virus to be reactivated and to grow in non-proliferative cells lacking a high concentration of phosphorylated nucleic acid precursors. In Human herpesvirus 1 (strain SC16) (HHV-1), this protein is Thymidine kinase.